The sequence spans 450 residues: tRNA-2-methylthio-N(6)-dimethylallyladenosine synthase (450 aa).

The region spanning 2–119 (KKVFVKTYGC…LPDLIARRQR (118 aa)) is the MTTase N-terminal domain. The [4Fe-4S] cluster site is built by cysteine 11, cysteine 48, cysteine 82, cysteine 156, cysteine 160, and cysteine 163. Residues 142-375 (RVEGPSAFVS…QATIEENVQR (234 aa)) form the Radical SAM core domain. The 71-residue stretch at 378–448 (QGMVGTVQRI…PHSLRGEIVV (71 aa)) folds into the TRAM domain.

The protein belongs to the methylthiotransferase family. MiaB subfamily. Monomer. [4Fe-4S] cluster serves as cofactor.

The protein resides in the cytoplasm. It catalyses the reaction N(6)-dimethylallyladenosine(37) in tRNA + (sulfur carrier)-SH + AH2 + 2 S-adenosyl-L-methionine = 2-methylsulfanyl-N(6)-dimethylallyladenosine(37) in tRNA + (sulfur carrier)-H + 5'-deoxyadenosine + L-methionine + A + S-adenosyl-L-homocysteine + 2 H(+). In terms of biological role, catalyzes the methylthiolation of N6-(dimethylallyl)adenosine (i(6)A), leading to the formation of 2-methylthio-N6-(dimethylallyl)adenosine (ms(2)i(6)A) at position 37 in tRNAs that read codons beginning with uridine. In Cupriavidus taiwanensis (strain DSM 17343 / BCRC 17206 / CCUG 44338 / CIP 107171 / LMG 19424 / R1) (Ralstonia taiwanensis (strain LMG 19424)), this protein is tRNA-2-methylthio-N(6)-dimethylallyladenosine synthase.